A 1305-amino-acid chain; its full sequence is Contactin-associated protein like 5-4 (1305 aa).

The signal sequence occupies residues 1–24 (MNSVRRLNSILTLVLSGLWHLGLT). Topologically, residues 25-1237 (ATNYNCDEPL…LTDTVQSDSA (1213 aa)) are extracellular. Residues 30–174 (CDEPLASFLS…IGMRVEVYGC (145 aa)) enclose the F5/8 type C domain. Residues Cys-30 and Cys-174 are joined by a disulfide bond. 2 consecutive Laminin G-like domains span residues 180–360 (IVGF…TFSC) and 367–544 (PITF…IDLC). Residue Asn-282 is glycosylated (N-linked (GlcNAc...) asparagine). A disulfide bridge links Cys-329 with Cys-360. A glycan (N-linked (GlcNAc...) asparagine) is linked at Asn-496. Disulfide bonds link Cys-512/Cys-544, Cys-550/Cys-561, and Cys-555/Cys-570. The region spanning 546 to 583 (IKDRCLPNYCEHGGHCAQNWTTFYCNCSDTGYTGATCH) is the EGF-like 1 domain. N-linked (GlcNAc...) asparagine glycosylation occurs at Asn-571. A disulfide bridge connects residues Cys-572 and Cys-582. One can recognise a Fibrinogen C-terminal domain in the interval 584–790 (DSVYEQSCEV…LRCYGDRHFW (207 aa)). The N-linked (GlcNAc...) asparagine glycan is linked to Asn-622. One can recognise a Laminin G-like 3 domain in the interval 791–956 (NAVSFTTEAS…KLMSGVTPGC (166 aa)). 4 cysteine pairs are disulfide-bonded: Cys-929–Cys-956, Cys-960–Cys-973, Cys-967–Cys-982, and Cys-984–Cys-994. The 39-residue stretch at 957-995 (LGHCSSYGSNCLNGGKCVEKQSGYSCDCTNSPNEGPFCQ) folds into the EGF-like 2 domain. Residues 1014-1198 (EPYLVIKNTS…VQGTLTESGC (185 aa)) form the Laminin G-like 4 domain. A glycan (N-linked (GlcNAc...) asparagine) is linked at Asn-1057. Cys-1163 and Cys-1198 are oxidised to a cystine. Residues 1238-1258 (VIGGIIALVTFVTFCVIGIMI) form a helical membrane-spanning segment. Over 1259 to 1305 (HFLYLHKQSHCTNQTKEKEYSENLSNSFRNAIDLQNTASECKREYFI) the chain is Cytoplasmic.

The protein belongs to the neurexin family.

It localises to the membrane. In terms of biological role, may play a role in the correct development and proper functioning of the peripheral and central nervous system and be involved in cell adhesion and intercellular communication. This is Contactin-associated protein like 5-4 (Cntnap5d) from Rattus norvegicus (Rat).